A 460-amino-acid polypeptide reads, in one-letter code: UDP-N-acetylmuramoylalanine--D-glutamate ligase (460 aa).

120–126 (GSNGKTT) contacts ATP.

This sequence belongs to the MurCDEF family.

Its subcellular location is the cytoplasm. It carries out the reaction UDP-N-acetyl-alpha-D-muramoyl-L-alanine + D-glutamate + ATP = UDP-N-acetyl-alpha-D-muramoyl-L-alanyl-D-glutamate + ADP + phosphate + H(+). It participates in cell wall biogenesis; peptidoglycan biosynthesis. Its function is as follows. Cell wall formation. Catalyzes the addition of glutamate to the nucleotide precursor UDP-N-acetylmuramoyl-L-alanine (UMA). The chain is UDP-N-acetylmuramoylalanine--D-glutamate ligase from Lactobacillus delbrueckii subsp. bulgaricus (strain ATCC BAA-365 / Lb-18).